A 522-amino-acid chain; its full sequence is Ribonuclease Y (522 aa).

The chain crosses the membrane as a helical span at residues 7–27; that stretch reads STILYCLFFFFLGIAAVLAFI. One can recognise a KH domain in the interval 212–272; that stretch reads TTSTVGVPTD…VRREVARMSL (61 aa). The region spanning 338–431 is the HD domain; the sequence is VLRHSVEVAF…VATADACSAS (94 aa).

This sequence belongs to the RNase Y family.

It localises to the cell membrane. Endoribonuclease that initiates mRNA decay. In Rhodopirellula baltica (strain DSM 10527 / NCIMB 13988 / SH1), this protein is Ribonuclease Y.